Consider the following 356-residue polypeptide: Homoserine O-succinyltransferase (356 aa).

The Acyl-thioester intermediate role is filled by Cys-146. Substrate is bound by residues Lys-167 and Ser-196. His-239 serves as the catalytic Proton acceptor. Residue Glu-241 is part of the active site. Substrate is bound at residue Arg-253.

The protein belongs to the MetA family.

The protein resides in the cytoplasm. It carries out the reaction L-homoserine + succinyl-CoA = O-succinyl-L-homoserine + CoA. It functions in the pathway amino-acid biosynthesis; L-methionine biosynthesis via de novo pathway; O-succinyl-L-homoserine from L-homoserine: step 1/1. In terms of biological role, transfers a succinyl group from succinyl-CoA to L-homoserine, forming succinyl-L-homoserine. In Thioalkalivibrio nitratireducens (strain DSM 14787 / UNIQEM 213 / ALEN2), this protein is Homoserine O-succinyltransferase.